A 354-amino-acid polypeptide reads, in one-letter code: Ornithine transcarbamylase, mitochondrial (354 aa).

The N-terminal 32 residues, 1–32 (MLSNLRILLNKAALRKAHTSMVRNFRYGKPVQ), are a transit peptide targeting the mitochondrion. K70 bears the N6-acetyllysine; alternate mark. Position 70 is an N6-succinyllysine; alternate (K70). K80 bears the N6-succinyllysine mark. An N6-acetyllysine; alternate modification is found at K88. K88 carries the N6-succinyllysine; alternate modification. Residue 90–93 (STRT) participates in carbamoyl phosphate binding. S133 bears the Phosphoserine mark. A carbamoyl phosphate-binding site is contributed by R141. K144 carries the N6-acetyllysine; alternate modification. K144 is subject to N6-succinyllysine; alternate. 2 residues coordinate carbamoyl phosphate: H168 and Q171. N199 serves as a coordination point for L-ornithine. K221, K231, and K238 each carry N6-acetyllysine; alternate. 3 positions are modified to N6-succinyllysine; alternate: K221, K231, and K238. Residues D263, S267, and M268 each coordinate L-ornithine. An N6-succinyllysine mark is found at K274 and K289. Residue K292 is modified to N6-acetyllysine; alternate. K292 bears the N6-succinyllysine; alternate mark. The Proton acceptor role is filled by C303. 303 to 304 (CL) is a binding site for carbamoyl phosphate. Residue K307 is modified to N6-acetyllysine; alternate. K307 is subject to N6-succinyllysine; alternate. R330 serves as a coordination point for carbamoyl phosphate.

Belongs to the aspartate/ornithine carbamoyltransferase superfamily. OTCase family. In terms of assembly, homotrimer. Acetylation at Lys-88 negatively regulates ornithine carbamoyltransferase activity in response to nutrient signals.

It localises to the mitochondrion matrix. The enzyme catalyses carbamoyl phosphate + L-ornithine = L-citrulline + phosphate + H(+). It participates in nitrogen metabolism; urea cycle; L-citrulline from L-ornithine and carbamoyl phosphate: step 1/1. Its activity is regulated as follows. Negatively regulated by lysine acetylation. Its function is as follows. Catalyzes the second step of the urea cycle, the condensation of carbamoyl phosphate with L-ornithine to form L-citrulline. The urea cycle ensures the detoxification of ammonia by converting it to urea for excretion. In Rattus norvegicus (Rat), this protein is Ornithine transcarbamylase, mitochondrial.